The sequence spans 156 residues: MRSSAKQEELVKAFKALLKEEKFSSQGEIVLALQDQGFDNINQSKVSRMLTKFGAVRTRNAKMEMVYCLPAELGVPTTSSPLKNLVLDIDYNDAVVVIHTSPGAAQLIARLLDSLGKAEGILGTIAGDDTIFTTPANGFTVKDLYEAILELFEQEL.

The protein belongs to the ArgR family.

It localises to the cytoplasm. It functions in the pathway amino-acid biosynthesis; L-arginine biosynthesis [regulation]. Its function is as follows. Regulates arginine biosynthesis genes. The sequence is that of Arginine repressor from Citrobacter koseri (strain ATCC BAA-895 / CDC 4225-83 / SGSC4696).